A 365-amino-acid chain; its full sequence is SWR1 complex subunit 2 (365 aa).

Disordered regions lie at residues 43–83 (ALKE…NEKE) and 95–147 (PGKT…EGEK). Residues 48–74 (EHDDEYEAEREVADEFDSDFNDDEPEP) are compositionally biased toward acidic residues. The span at 99–108 (ASKKKKKKTK) shows a compositional bias: basic residues. The span at 118-132 (GDEKPGEELGNKEQE) shows a compositional bias: basic and acidic residues. Coiled coils occupy residues 123–150 (GEEL…KVIR) and 184–225 (GEEK…KAIV). Acidic residues predominate over residues 133–144 (EKEENEAQEDME). A disordered region spans residues 333–365 (RTKIPKSNKSFSLRSSARFLSSESEEESEEDSD). The segment covering 342–354 (SFSLRSSARFLSS) has biased composition (low complexity). A compositionally biased stretch (acidic residues) spans 355–365 (ESEEESEEDSD).

Belongs to the VPS72/YL1 family. As to quaternary structure, component of the SWR1 chromatin-remodeling complex composed of at least ARP6/ESD1/SUF3, PIE1, SWC6, SWC2 and H2AZs (HTA8, HTA9, HTA11). Interacts directly with SWC6 and H2AZs, but not with ARP6.

Its function is as follows. Component of the SWR1 complex which mediates the ATP-dependent exchange of histone H2A for the H2A variant H2A.F/Z leading to transcriptional regulation of selected genes (e.g. FLC) by chromatin remodeling. The protein is SWR1 complex subunit 2 (SWC2) of Arabidopsis thaliana (Mouse-ear cress).